Here is a 276-residue protein sequence, read N- to C-terminus: MELKAFIEITRPHNCILAGIVGLLGSIVALGHFPDPKTALLIFLVVTVGCAGGNTINDYFDYEIDKINRPERPLPRGAMGRKVALYYSMLLFAVGLALAYMINIYAFILGVIAYVTMFIYAWKLKPLPFVGNIVVAGLTGATPLYGAVAVEHLGLAGYLAICAFLVNVAREVIKDIEDVEGDMAKGAKTLPIIWGKKRAAYVGVLFALLTVIASFLPVKASVGVGYYAMVPVDLLILYAAYLILRNQDREVAHKSQKLLKMSIFLAVMAFLIAAIV.

Helical transmembrane passes span Asn-14 to Pro-34, Leu-40 to Phe-60, Phe-92 to Ile-112, Gly-146 to Val-166, Val-202 to Val-222, Val-224 to Leu-244, and Gln-256 to Val-276.

The protein belongs to the UbiA prenyltransferase family. DGGGP synthase subfamily. Mg(2+) is required as a cofactor.

The protein localises to the cell membrane. The catalysed reaction is sn-3-O-(geranylgeranyl)glycerol 1-phosphate + (2E,6E,10E)-geranylgeranyl diphosphate = 2,3-bis-O-(geranylgeranyl)-sn-glycerol 1-phosphate + diphosphate. It participates in membrane lipid metabolism; glycerophospholipid metabolism. Its function is as follows. Prenyltransferase that catalyzes the transfer of the geranylgeranyl moiety of geranylgeranyl diphosphate (GGPP) to the C2 hydroxyl of (S)-3-O-geranylgeranylglyceryl phosphate (GGGP). This reaction is the second ether-bond-formation step in the biosynthesis of archaeal membrane lipids. The polypeptide is Digeranylgeranylglyceryl phosphate synthase (Thermococcus onnurineus (strain NA1)).